Reading from the N-terminus, the 843-residue chain is Glycogen phosphorylase, brain form (843 aa).

The residue at position 2 (Ala-2) is an N-acetylalanine. Ser-15 is modified (phosphoserine; by PHK; in form phosphorylase A). Asp-43, Tyr-197, and Arg-310 together coordinate AMP. At Tyr-197 the chain carries Phosphotyrosine. Tyr-473 is subject to Phosphotyrosine. A Phosphoserine modification is found at Ser-524. Residue Lys-569 participates in pyridoxal 5'-phosphate binding. Residues 677–678 form a pyridoxal 5'-phosphate region; it reads TG. Lys-681 carries the N6-(pyridoxal phosphate)lysine modification.

The protein belongs to the glycogen phosphorylase family. Homodimer. Dimers associate into a tetramer to form the enzymatically active phosphorylase A. The cofactor is pyridoxal 5'-phosphate. Post-translationally, phosphorylation of Ser-15 converts phosphorylase B (unphosphorylated) to phosphorylase A.

It carries out the reaction [(1-&gt;4)-alpha-D-glucosyl](n) + phosphate = [(1-&gt;4)-alpha-D-glucosyl](n-1) + alpha-D-glucose 1-phosphate. With respect to regulation, activity of phosphorylase is controlled both by allosteric means (through the non-covalent binding of metabolites) and by covalent modification. Thus AMP allosterically activates, whereas ATP, ADP, and glucose-6-phosphate allosterically inhibit, phosphorylase B. Functionally, glycogen phosphorylase that regulates glycogen mobilization. Phosphorylase is an important allosteric enzyme in carbohydrate metabolism. Enzymes from different sources differ in their regulatory mechanisms and in their natural substrates. However, all known phosphorylases share catalytic and structural properties. The chain is Glycogen phosphorylase, brain form (Pygb) from Mus musculus (Mouse).